The sequence spans 250 residues: Coproheme decarboxylase (250 aa).

Fe-coproporphyrin III-binding positions include arginine 131, 145-149 (YPMNK), histidine 172, and glutamine 185. Tyrosine 145 is a catalytic residue.

This sequence belongs to the ChdC family. Type 1 subfamily. Fe-coproporphyrin III serves as cofactor.

It carries out the reaction Fe-coproporphyrin III + 2 H2O2 + 2 H(+) = heme b + 2 CO2 + 4 H2O. The catalysed reaction is Fe-coproporphyrin III + H2O2 + H(+) = harderoheme III + CO2 + 2 H2O. It catalyses the reaction harderoheme III + H2O2 + H(+) = heme b + CO2 + 2 H2O. It functions in the pathway porphyrin-containing compound metabolism; protoheme biosynthesis. Involved in coproporphyrin-dependent heme b biosynthesis. Catalyzes the decarboxylation of Fe-coproporphyrin III (coproheme) to heme b (protoheme IX), the last step of the pathway. The reaction occurs in a stepwise manner with a three-propionate intermediate. The chain is Coproheme decarboxylase from Staphylococcus aureus (strain USA300 / TCH1516).